We begin with the raw amino-acid sequence, 271 residues long: Type III pantothenate kinase (271 aa).

Residue 6-13 (DVRNTNIV) participates in ATP binding. 109–112 (GADR) is a substrate binding site. The active-site Proton acceptor is D111. D131 is a K(+) binding site. T134 serves as a coordination point for ATP. A substrate-binding site is contributed by T186.

The protein belongs to the type III pantothenate kinase family. As to quaternary structure, homodimer. Requires NH4(+) as cofactor. The cofactor is K(+).

The protein localises to the cytoplasm. The enzyme catalyses (R)-pantothenate + ATP = (R)-4'-phosphopantothenate + ADP + H(+). The protein operates within cofactor biosynthesis; coenzyme A biosynthesis; CoA from (R)-pantothenate: step 1/5. Catalyzes the phosphorylation of pantothenate (Pan), the first step in CoA biosynthesis. The polypeptide is Type III pantothenate kinase (Rhodococcus erythropolis (strain PR4 / NBRC 100887)).